The sequence spans 308 residues: Elongation factor Ts (308 aa).

An involved in Mg(2+) ion dislocation from EF-Tu region spans residues 80 to 83 (TDFV).

It belongs to the EF-Ts family.

The protein resides in the cytoplasm. In terms of biological role, associates with the EF-Tu.GDP complex and induces the exchange of GDP to GTP. It remains bound to the aminoacyl-tRNA.EF-Tu.GTP complex up to the GTP hydrolysis stage on the ribosome. The sequence is that of Elongation factor Ts from Rhodopseudomonas palustris (strain BisB18).